The sequence spans 950 residues: Glycine dehydrogenase (decarboxylating) (950 aa).

At lysine 698 the chain carries N6-(pyridoxal phosphate)lysine.

The protein belongs to the GcvP family. In terms of assembly, the glycine cleavage system is composed of four proteins: P, T, L and H. Pyridoxal 5'-phosphate serves as cofactor.

The catalysed reaction is N(6)-[(R)-lipoyl]-L-lysyl-[glycine-cleavage complex H protein] + glycine + H(+) = N(6)-[(R)-S(8)-aminomethyldihydrolipoyl]-L-lysyl-[glycine-cleavage complex H protein] + CO2. In terms of biological role, the glycine cleavage system catalyzes the degradation of glycine. The P protein binds the alpha-amino group of glycine through its pyridoxal phosphate cofactor; CO(2) is released and the remaining methylamine moiety is then transferred to the lipoamide cofactor of the H protein. This is Glycine dehydrogenase (decarboxylating) from Neisseria meningitidis serogroup C (strain 053442).